The primary structure comprises 336 residues: Ketol-acid reductoisomerase (NADP(+)) 1 (336 aa).

Residues alanine 2–threonine 181 enclose the KARI N-terminal Rossmann domain. Residues tyrosine 25 to glutamine 28, arginine 48, serine 52, and aspartate 82 to glutamine 85 each bind NADP(+). Histidine 107 is a catalytic residue. Glycine 133 contributes to the NADP(+) binding site. Residues threonine 182–valine 327 enclose the KARI C-terminal knotted domain. Mg(2+)-binding residues include aspartate 190, glutamate 194, glutamate 226, and glutamate 230. Substrate is bound at residue serine 251.

Belongs to the ketol-acid reductoisomerase family. Requires Mg(2+) as cofactor.

The catalysed reaction is (2R)-2,3-dihydroxy-3-methylbutanoate + NADP(+) = (2S)-2-acetolactate + NADPH + H(+). It carries out the reaction (2R,3R)-2,3-dihydroxy-3-methylpentanoate + NADP(+) = (S)-2-ethyl-2-hydroxy-3-oxobutanoate + NADPH + H(+). The protein operates within amino-acid biosynthesis; L-isoleucine biosynthesis; L-isoleucine from 2-oxobutanoate: step 2/4. It functions in the pathway amino-acid biosynthesis; L-valine biosynthesis; L-valine from pyruvate: step 2/4. Involved in the biosynthesis of branched-chain amino acids (BCAA). Catalyzes an alkyl-migration followed by a ketol-acid reduction of (S)-2-acetolactate (S2AL) to yield (R)-2,3-dihydroxy-isovalerate. In the isomerase reaction, S2AL is rearranged via a Mg-dependent methyl migration to produce 3-hydroxy-3-methyl-2-ketobutyrate (HMKB). In the reductase reaction, this 2-ketoacid undergoes a metal-dependent reduction by NADPH to yield (R)-2,3-dihydroxy-isovalerate. This is Ketol-acid reductoisomerase (NADP(+)) 1 from Bacillus thuringiensis subsp. konkukian (strain 97-27).